A 329-amino-acid polypeptide reads, in one-letter code: NADH-quinone oxidoreductase subunit H (329 aa).

9 helical membrane passes run Leu-9–Ile-29, Gly-42–Phe-62, Leu-75–Ile-95, Ile-117–Gly-137, Ile-154–Val-174, Gly-188–Ala-208, Leu-238–Ile-258, Trp-269–Trp-291, and Trp-309–Ile-329.

This sequence belongs to the complex I subunit 1 family. NDH-1 is composed of 14 different subunits. Subunits NuoA, H, J, K, L, M, N constitute the membrane sector of the complex.

It is found in the cell inner membrane. It carries out the reaction a quinone + NADH + 5 H(+)(in) = a quinol + NAD(+) + 4 H(+)(out). Functionally, NDH-1 shuttles electrons from NADH, via FMN and iron-sulfur (Fe-S) centers, to quinones in the respiratory chain. The immediate electron acceptor for the enzyme in this species is believed to be ubiquinone. Couples the redox reaction to proton translocation (for every two electrons transferred, four hydrogen ions are translocated across the cytoplasmic membrane), and thus conserves the redox energy in a proton gradient. This subunit may bind ubiquinone. In Helicobacter acinonychis (strain Sheeba), this protein is NADH-quinone oxidoreductase subunit H.